The chain runs to 175 residues: Translation initiation factor IF-3 (175 aa).

The protein belongs to the IF-3 family. In terms of assembly, monomer.

It localises to the cytoplasm. Its function is as follows. IF-3 binds to the 30S ribosomal subunit and shifts the equilibrium between 70S ribosomes and their 50S and 30S subunits in favor of the free subunits, thus enhancing the availability of 30S subunits on which protein synthesis initiation begins. In Blochmanniella floridana, this protein is Translation initiation factor IF-3.